The chain runs to 202 residues: CASP-like protein 2B2 (202 aa).

Residues 1 to 29 lie on the Cytoplasmic side of the membrane; that stretch reads MSYLGVGVSPGNVPVYHGMNLKVIDRRVR. Residues 30-50 form a helical membrane-spanning segment; that stretch reads LAELVLRCVICALGVLAAVLV. The Extracellular portion of the chain corresponds to 51–72; that stretch reads GTDTQVKEIFSIQKKARFTDMK. Residues 73-93 traverse the membrane as a helical segment; that stretch reads ALVFLVVANGIAAAYSLVQGV. At 94 to 118 the chain is on the cytoplasmic side; the sequence is RCVVGMVKGSVLFSKPLAWVIFSGD. The chain crosses the membrane as a helical span at residues 119 to 139; the sequence is QMMAYLTLSAVAAAVQSASFA. Over 140 to 164 the chain is Extracellular; the sequence is KLGQPDLQWMKICNMYGKFCNQVGE. Residues 165–185 form a helical membrane-spanning segment; that stretch reads GIASALLVSVSMVVLSCISSF. At 186–202 the chain is on the cytoplasmic side; that stretch reads SLFRLYGGNKGKDGARW.

It belongs to the Casparian strip membrane proteins (CASP) family. As to quaternary structure, homodimer and heterodimers.

It is found in the cell membrane. In Populus trichocarpa (Western balsam poplar), this protein is CASP-like protein 2B2.